A 482-amino-acid chain; its full sequence is Methylenetetrahydrofolate--tRNA-(uracil-5-)-methyltransferase TrmFO (482 aa).

FAD is bound at residue G11–G16. A disordered region spans residues L450–E482.

The protein belongs to the MnmG family. TrmFO subfamily. FAD is required as a cofactor.

The protein localises to the cytoplasm. It catalyses the reaction uridine(54) in tRNA + (6R)-5,10-methylene-5,6,7,8-tetrahydrofolate + NADH + H(+) = 5-methyluridine(54) in tRNA + (6S)-5,6,7,8-tetrahydrofolate + NAD(+). The enzyme catalyses uridine(54) in tRNA + (6R)-5,10-methylene-5,6,7,8-tetrahydrofolate + NADPH + H(+) = 5-methyluridine(54) in tRNA + (6S)-5,6,7,8-tetrahydrofolate + NADP(+). Catalyzes the folate-dependent formation of 5-methyl-uridine at position 54 (M-5-U54) in all tRNAs. This chain is Methylenetetrahydrofolate--tRNA-(uracil-5-)-methyltransferase TrmFO, found in Rhodospirillum rubrum (strain ATCC 11170 / ATH 1.1.1 / DSM 467 / LMG 4362 / NCIMB 8255 / S1).